A 419-amino-acid polypeptide reads, in one-letter code: S-adenosylmethionine synthase (419 aa).

ATP is bound at residue His15. Asp17 contacts Mg(2+). Residue Glu43 coordinates K(+). L-methionine-binding residues include Glu56 and Gln99. A flexible loop region spans residues 99–109 (QSPEIAQGVSC). Residues 173–175 (DGK), 253–254 (RF), Asp262, 268–269 (RK), Ala285, and Lys289 each bind ATP. Asp262 is an L-methionine binding site. Lys293 serves as a coordination point for L-methionine.

Belongs to the AdoMet synthase family. As to quaternary structure, homotetramer; dimer of dimers. Mg(2+) is required as a cofactor. It depends on K(+) as a cofactor.

The protein localises to the cytoplasm. It carries out the reaction L-methionine + ATP + H2O = S-adenosyl-L-methionine + phosphate + diphosphate. The protein operates within amino-acid biosynthesis; S-adenosyl-L-methionine biosynthesis; S-adenosyl-L-methionine from L-methionine: step 1/1. Functionally, catalyzes the formation of S-adenosylmethionine (AdoMet) from methionine and ATP. The overall synthetic reaction is composed of two sequential steps, AdoMet formation and the subsequent tripolyphosphate hydrolysis which occurs prior to release of AdoMet from the enzyme. This is S-adenosylmethionine synthase from Gloeobacter violaceus (strain ATCC 29082 / PCC 7421).